Reading from the N-terminus, the 930-residue chain is Zn(2)-C6 fungal-type transcription factor FTF1c (930 aa).

The segment at residues 137 to 164 is a DNA-binding region (zn(2)-C6 fungal-type); that stretch reads CIACRRKKIRCSGEKPACEHCLCSYIPC.

The protein resides in the nucleus. Its function is as follows. Zn(2)-C6 fungal-type transcription factor that has a role in the establishment of the fungus within the plant and/or the progress of the disease. Regulates the expression of virulence factors such as SIX1 and SIX6. The polypeptide is Zn(2)-C6 fungal-type transcription factor FTF1c (Fusarium oxysporum f. sp. lycopersici (strain 4287 / CBS 123668 / FGSC 9935 / NRRL 34936) (Fusarium vascular wilt of tomato)).